The following is an 805-amino-acid chain: Endonuclease MutS2 (805 aa).

344-351 (GPNGGGKT) provides a ligand contact to ATP. The interval 705 to 724 (RSRSEKLQAASEARPSAPPG) is disordered. Residues 729-804 (LDVRGLRVEE…GDAVTVVSLR (76 aa)) form the Smr domain.

It belongs to the DNA mismatch repair MutS family. MutS2 subfamily. In terms of assembly, homodimer. Binds to stalled ribosomes, contacting rRNA.

Functionally, endonuclease that is involved in the suppression of homologous recombination and thus may have a key role in the control of bacterial genetic diversity. Acts as a ribosome collision sensor, splitting the ribosome into its 2 subunits. Detects stalled/collided 70S ribosomes which it binds and splits by an ATP-hydrolysis driven conformational change. Acts upstream of the ribosome quality control system (RQC), a ribosome-associated complex that mediates the extraction of incompletely synthesized nascent chains from stalled ribosomes and their subsequent degradation. Probably generates substrates for RQC. In Anaeromyxobacter sp. (strain Fw109-5), this protein is Endonuclease MutS2.